We begin with the raw amino-acid sequence, 368 residues long: Agmatine deiminase (368 aa).

Residue Cys357 is the Amidino-cysteine intermediate of the active site.

This sequence belongs to the agmatine deiminase family. In terms of assembly, homodimer.

It catalyses the reaction agmatine + H2O = N-carbamoylputrescine + NH4(+). The protein operates within amine and polyamine biosynthesis; putrescine biosynthesis via agmatine pathway; N-carbamoylputrescine from agmatine: step 1/1. Its function is as follows. Mediates the hydrolysis of agmatine into N-carbamoylputrescine in the arginine decarboxylase (ADC) pathway of putrescine biosynthesis, a basic polyamine. In Pseudomonas aeruginosa (strain UCBPP-PA14), this protein is Agmatine deiminase.